A 464-amino-acid chain; its full sequence is Protein transport protein HofB homolog (464 aa).

Position 264 to 271 (264 to 271 (GPTGSGKS)) interacts with ATP.

This sequence belongs to the GSP E family.

This chain is Protein transport protein HofB homolog (hofB), found in Haemophilus influenzae (strain ATCC 51907 / DSM 11121 / KW20 / Rd).